The following is a 307-amino-acid chain: Pyridoxal 5'-phosphate synthase subunit PdxS (307 aa).

A D-ribose 5-phosphate-binding site is contributed by Asp37. Residue Lys94 is the Schiff-base intermediate with D-ribose 5-phosphate of the active site. Gly166 contacts D-ribose 5-phosphate. Arg178 is a D-glyceraldehyde 3-phosphate binding site. Residues Gly227 and 248-249 each bind D-ribose 5-phosphate; that span reads GS.

This sequence belongs to the PdxS/SNZ family. As to quaternary structure, in the presence of PdxT, forms a dodecamer of heterodimers.

The enzyme catalyses aldehydo-D-ribose 5-phosphate + D-glyceraldehyde 3-phosphate + L-glutamine = pyridoxal 5'-phosphate + L-glutamate + phosphate + 3 H2O + H(+). Its pathway is cofactor biosynthesis; pyridoxal 5'-phosphate biosynthesis. Catalyzes the formation of pyridoxal 5'-phosphate from ribose 5-phosphate (RBP), glyceraldehyde 3-phosphate (G3P) and ammonia. The ammonia is provided by the PdxT subunit. Can also use ribulose 5-phosphate and dihydroxyacetone phosphate as substrates, resulting from enzyme-catalyzed isomerization of RBP and G3P, respectively. The polypeptide is Pyridoxal 5'-phosphate synthase subunit PdxS (Mycobacterium leprae (strain Br4923)).